The primary structure comprises 652 residues: DNA ligase (652 aa).

Residues 29–33 (DSEYD), 78–79 (SL), and Glu-107 contribute to the NAD(+) site. The active-site N6-AMP-lysine intermediate is the Lys-109. Arg-130, Glu-164, Lys-278, and Lys-302 together coordinate NAD(+). The Zn(2+) site is built by Cys-395, Cys-398, Cys-413, and Cys-418. Positions 577-652 (VADAALSGLT…VRDEAWLESL (76 aa)) constitute a BRCT domain.

The protein belongs to the NAD-dependent DNA ligase family. LigA subfamily. Mg(2+) serves as cofactor. Mn(2+) is required as a cofactor.

The enzyme catalyses NAD(+) + (deoxyribonucleotide)n-3'-hydroxyl + 5'-phospho-(deoxyribonucleotide)m = (deoxyribonucleotide)n+m + AMP + beta-nicotinamide D-nucleotide.. Functionally, DNA ligase that catalyzes the formation of phosphodiester linkages between 5'-phosphoryl and 3'-hydroxyl groups in double-stranded DNA using NAD as a coenzyme and as the energy source for the reaction. It is essential for DNA replication and repair of damaged DNA. The sequence is that of DNA ligase from Streptococcus pneumoniae (strain 70585).